A 158-amino-acid chain; its full sequence is Glycine/sarcosine/betaine reductase complex component A1 (158 aa).

The active site involves selenocysteine 46. A non-standard amino acid (selenocysteine) is located at residue selenocysteine 46.

Belongs to the GrdA family. In terms of assembly, monomer. Component of the glycine, sarcosine and betaine reductase complexes, together with components B and C.

It catalyses the reaction acetyl phosphate + [thioredoxin]-disulfide + NH4(+) + H2O = [thioredoxin]-dithiol + glycine + phosphate + H(+). The catalysed reaction is acetyl phosphate + methylamine + [thioredoxin]-disulfide + H2O = sarcosine + [thioredoxin]-dithiol + phosphate + H(+). The enzyme catalyses acetyl phosphate + trimethylamine + [thioredoxin]-disulfide + H2O = glycine betaine + [thioredoxin]-dithiol + phosphate + H(+). In terms of biological role, in the first step of glycine, betaine and sarcosine reductases, the substrate is bound to component PB via a Schiff base intermediate. Then the PB-activated substrate is nucleophilically attacked by the selenol anion of component PA to transform it to a carboxymethylated selenoether and the respective amine. By action of component PC, acetyl phosphate is formed, leaving component PA in its oxidized state. Finally component PA becomes reduced by the thioredoxin system to start a new catalytic cycle of reductive deamination. The sequence is that of Glycine/sarcosine/betaine reductase complex component A1 (grdA1) from Photobacterium profundum (strain SS9).